The sequence spans 511 residues: Alpha-amylase 2B (511 aa).

The N-terminal stretch at 1-15 is a signal peptide; that stretch reads MKFFLLLFTIGFCWA. Q16 bears the Pyrrolidone carboxylic acid mark. 3 disulfides stabilise this stretch: C43–C101, C85–C130, and C156–C175. Ca(2+) contacts are provided by N115, R173, and D182. R210 provides a ligand contact to chloride. Catalysis depends on D212, which acts as the Nucleophile. H216 is a binding site for Ca(2+). E248 serves as the catalytic Proton donor. Chloride is bound by residues N313 and R352. 2 disulfide bridges follow: C393–C399 and C465–C477.

Belongs to the glycosyl hydrolase 13 family. As to quaternary structure, monomer. Ca(2+) is required as a cofactor. Chloride serves as cofactor.

The protein localises to the secreted. It catalyses the reaction Endohydrolysis of (1-&gt;4)-alpha-D-glucosidic linkages in polysaccharides containing three or more (1-&gt;4)-alpha-linked D-glucose units.. The polypeptide is Alpha-amylase 2B (AMY2B) (Homo sapiens (Human)).